We begin with the raw amino-acid sequence, 554 residues long: Putative mediator of RNA polymerase II transcription subunit 29 (554 aa).

Disordered stretches follow at residues 118-301, 330-381, 398-428, and 483-524; these read DNKA…NTEA, QQQQ…PLPQ, LENQ…LQLQ, and NTNL…DDNT. The segment covering 122 to 210 has biased composition (low complexity); that stretch reads NTNNNNNNNN…NNSINNNSNN (89 aa). Positions 167-194 form a coiled coil; sequence NNNNNNNYNNNNNNNNNNNNNNNNNNNN. The segment covering 211 to 225 has biased composition (polar residues); the sequence is KVGSNDNPSTAPITE. Positions 226–264 are enriched in low complexity; sequence NNTENNAGNTNNTNNNNNNNNNNNNNNNNNNNNNNNNTN. A compositionally biased stretch (polar residues) spans 265 to 300; sequence QVAESSNISSNTTPPETTNIVNDPNSVSGGNLTNTE. Composition is skewed to low complexity over residues 330–374, 419–428, and 483–517; these read QQQQ…QQPQ, QQQQEQLQLQ, and NTNL…PEIN. A coiled-coil region spans residues 419–486; that stretch reads QQQQEQLQLQ…SLENQINTNL (68 aa).

The protein belongs to the Mediator complex subunit 29 family. As to quaternary structure, component of the Mediator complex.

It is found in the nucleus. Functionally, component of the Mediator complex, a coactivator involved in the regulated transcription of nearly all RNA polymerase II-dependent genes. Mediator functions as a bridge to convey information from gene-specific regulatory proteins to the basal RNA polymerase II transcription machinery. Mediator is recruited to promoters by direct interactions with regulatory proteins and serves as a scaffold for the assembly of a functional preinitiation complex with RNA polymerase II and the general transcription factors. This chain is Putative mediator of RNA polymerase II transcription subunit 29 (med29), found in Dictyostelium discoideum (Social amoeba).